Consider the following 475-residue polypeptide: Beta-amyrin 28-monooxygenase (475 aa).

A helical transmembrane segment spans residues 2-22 (YLTILFLFVSSILLSLMFLLR). Cys-422 serves as a coordination point for heme.

Belongs to the cytochrome P450 family. Heme serves as cofactor.

The protein resides in the membrane. The catalysed reaction is beta-amyrin + 3 reduced [NADPH--hemoprotein reductase] + 3 O2 = oleanolate + 3 oxidized [NADPH--hemoprotein reductase] + 4 H2O + 4 H(+). Its function is as follows. Catalyzes the oxidation of the methyl group to a carboxyl group at the C-28 position of beta-amyrin to form oleanolate. This chain is Beta-amyrin 28-monooxygenase, found in Barbarea vulgaris (Yellow rocket).